The sequence spans 318 residues: Olfactory receptor 56A1 (318 aa).

Topologically, residues 1-32 are extracellular; that stretch reads MIQPMASPSNSSTVPVSEFLLICFPNFQSWQH. An N-linked (GlcNAc...) asparagine glycan is attached at asparagine 10. A helical membrane pass occupies residues 33–53; the sequence is WLSLPLSLLFLLAMGANTTLL. Over 54 to 61 the chain is Cytoplasmic; sequence ITIQLEAS. Residues 62–82 traverse the membrane as a helical segment; it reads LHQPLYYLLSLLSLLDIVLCL. Topologically, residues 83-106 are extracellular; the sequence is TVIPKVLAIFWYDLRSISFPACFL. A disulfide bridge connects residues cysteine 104 and cysteine 196. The helical transmembrane segment at 107–127 threads the bilayer; the sequence is QMFIMNSFLPMESCTFMVMAY. Over 128–146 the chain is Cytoplasmic; that stretch reads DRYVAICHPLRYPSIITNQ. The helical transmembrane segment at 147 to 167 threads the bilayer; that stretch reads FVAKASVFIVVRNALLTAPIP. Over 168-203 the chain is Extracellular; that stretch reads ILTSLLHYCGENVIENCICANLSVSRLSCDNFTLNR. N-linked (GlcNAc...) asparagine glycosylation is found at asparagine 188 and asparagine 198. The helical transmembrane segment at 204-224 threads the bilayer; the sequence is IYQFVAGWTLLGSDLFLIFLS. Over 225-244 the chain is Cytoplasmic; the sequence is YTFILRAVLRFKAEGAAVKA. The helical transmembrane segment at 245-265 threads the bilayer; the sequence is LSTCGSHFILILFFSTILLVV. Residues 266–280 lie on the Extracellular side of the membrane; sequence VLTNVARKKVPMDIL. Residues 281–301 traverse the membrane as a helical segment; that stretch reads ILLNVLHHLIPPALNPIVYGV. Residues 302-318 lie on the Cytoplasmic side of the membrane; sequence RTKEIKQGIQKLLQRGR.

It belongs to the G-protein coupled receptor 1 family.

The protein localises to the cell membrane. Odorant receptor. The protein is Olfactory receptor 56A1 (OR56A1) of Homo sapiens (Human).